The chain runs to 944 residues: UvrABC system protein A (944 aa).

ATP is bound at residue 31–38 (GLSGSGKS). Residues 253 to 280 (CPVCGHAISELEPKLFSFNNPAGACPTC) form a C4-type zinc finger. ABC transporter domains follow at residues 309 to 586 (WDRR…PDSL) and 606 to 936 (RNKK…HYLK). Residue 639-646 (GVSGSGKS) participates in ATP binding. The segment at 739-765 (CEACQGDGLIKVEMHFLPDIYVPCDVC) adopts a C4-type zinc-finger fold.

It belongs to the ABC transporter superfamily. UvrA family. In terms of assembly, forms a heterotetramer with UvrB during the search for lesions.

The protein resides in the cytoplasm. The UvrABC repair system catalyzes the recognition and processing of DNA lesions. UvrA is an ATPase and a DNA-binding protein. A damage recognition complex composed of 2 UvrA and 2 UvrB subunits scans DNA for abnormalities. When the presence of a lesion has been verified by UvrB, the UvrA molecules dissociate. This chain is UvrABC system protein A, found in Pseudomonas putida (strain ATCC 47054 / DSM 6125 / CFBP 8728 / NCIMB 11950 / KT2440).